We begin with the raw amino-acid sequence, 436 residues long: GTPase Der (436 aa).

2 EngA-type G domains span residues 4 to 167 (PVVA…PEVE) and 174 to 350 (VRVA…EQRT). GTP contacts are provided by residues 10-17 (GRPNVGKS), 57-61 (DTGGL), 120-123 (NKVD), 180-187 (GRPNVGKS), 227-231 (DTAGL), and 292-295 (NKWD). In terms of domain architecture, KH-like spans 351-435 (RRISTSEVND…PLRIILRRKN (85 aa)).

This sequence belongs to the TRAFAC class TrmE-Era-EngA-EngB-Septin-like GTPase superfamily. EngA (Der) GTPase family. Associates with the 50S ribosomal subunit.

Functionally, GTPase that plays an essential role in the late steps of ribosome biogenesis. This is GTPase Der from Gemmatimonas aurantiaca (strain DSM 14586 / JCM 11422 / NBRC 100505 / T-27).